The following is a 213-amino-acid chain: ER lumen protein-retaining receptor erd-2.1 (213 aa).

At 1–2 (MN) the chain is on the lumenal side. Residues 3 to 21 (LFRFTADVAHAIAIVVLLL) form a helical membrane-spanning segment. Residues 22-35 (KIWKSRSCEGISGR) lie on the Cytoplasmic side of the membrane. The chain crosses the membrane as a helical span at residues 36 to 53 (SQLLFALVFVTRYLDLFT). Residues 54-61 (NFFSFYNT) are Lumenal-facing. A helical membrane pass occupies residues 62 to 80 (AMKIFYLVASFGTVYLMWA). The Cytoplasmic portion of the chain corresponds to 81-96 (KFKATYDRNNDSFRIE). Residues 97-110 (FLVIPSMILALLIN) form a helical membrane-spanning segment. The Lumenal portion of the chain corresponds to 111-117 (HEFIFME). The helical transmembrane segment at 118 to 137 (VMWTFSIYLEAVAIMPQLFM) threads the bilayer. Residues 138–149 (LSRTGNAETITA) are Cytoplasmic-facing. Residues 150-168 (HYLFALGSYRFLYILNWVY) traverse the membrane as a helical segment. Residues 169 to 178 (RYYTESFFDP) lie on the Lumenal side of the membrane. A helical membrane pass occupies residues 179 to 199 (ISVVAGIVQTVLYADFFYLYI). Over 200 to 213 (TRVIQSNRQFEMSA) the chain is Cytoplasmic.

It belongs to the ERD2 family.

It localises to the endoplasmic reticulum membrane. Its function is as follows. Required for the retention of luminal endoplasmic reticulum proteins. Determines the specificity of the luminal ER protein retention system. Also required for normal vesicular traffic through the Golgi. The polypeptide is ER lumen protein-retaining receptor erd-2.1 (Caenorhabditis elegans).